The sequence spans 193 residues: NADH-quinone oxidoreductase subunit B (193 aa).

[4Fe-4S] cluster is bound by residues cysteine 72, cysteine 73, cysteine 137, and cysteine 167.

This sequence belongs to the complex I 20 kDa subunit family. In terms of assembly, NDH-1 is composed of 14 different subunits. Subunits NuoB, C, D, E, F, and G constitute the peripheral sector of the complex. [4Fe-4S] cluster is required as a cofactor.

It localises to the cell inner membrane. The enzyme catalyses a quinone + NADH + 5 H(+)(in) = a quinol + NAD(+) + 4 H(+)(out). NDH-1 shuttles electrons from NADH, via FMN and iron-sulfur (Fe-S) centers, to quinones in the respiratory chain. The immediate electron acceptor for the enzyme in this species is believed to be ubiquinone. Couples the redox reaction to proton translocation (for every two electrons transferred, four hydrogen ions are translocated across the cytoplasmic membrane), and thus conserves the redox energy in a proton gradient. The sequence is that of NADH-quinone oxidoreductase subunit B from Rhizobium rhizogenes (strain K84 / ATCC BAA-868) (Agrobacterium radiobacter).